Here is a 269-residue protein sequence, read N- to C-terminus: tRNA pseudouridine synthase A (269 aa).

The active-site Nucleophile is Asp-55. Tyr-111 contacts substrate.

This sequence belongs to the tRNA pseudouridine synthase TruA family.

The catalysed reaction is uridine(38/39/40) in tRNA = pseudouridine(38/39/40) in tRNA. In terms of biological role, formation of pseudouridine at positions 38, 39 and 40 in the anticodon stem and loop of transfer RNAs. This chain is tRNA pseudouridine synthase A, found in Methanosarcina acetivorans (strain ATCC 35395 / DSM 2834 / JCM 12185 / C2A).